A 982-amino-acid polypeptide reads, in one-letter code: Protein cramped (982 aa).

Disordered stretches follow at residues 1-37 (MEEL…GGGA), 71-111 (QKMK…GSGK), 323-349 (SLPS…ASLD), 407-456 (NKRL…SSGD), and 822-851 (GTSS…QEPG). Residues 7–20 (QPPPPPLTQPPPPS) are compositionally biased toward pro residues. Over residues 21-30 (SSVSIEEPLP) the composition is skewed to low complexity. Positions 86-98 (SEREPNKKEEKAA) are enriched in basic and acidic residues. The span at 100 to 111 (KTPSQLKTGSGK) shows a compositional bias: polar residues. One can recognise an SANT domain in the interval 109 to 173 (SGKTTWTNVE…HYYQTHHKIC (65 aa)). The segment covering 410 to 425 (LRTESGSEKRSPETKK) has biased composition (basic and acidic residues). A phosphoserine mark is found at S431 and S437. A compositionally biased stretch (low complexity) spans 822–833 (GTSSAGISTSGS).

Belongs to the cramped family. Ubiquitously expressed throughout embryonic development. High expression is detected in CNS and gonads.

It is found in the nucleus. Its function is as follows. Polycomb group (Pc-G) genes are needed to maintain expression patterns of the homeotic selector genes of the Antennapedia (Antp-C) and Bithorax (Bx-C) complexes, and hence for the maintenance of segmental determination. Can act as a modifier of position effect variegation (PEV). This is Protein cramped (crm) from Drosophila melanogaster (Fruit fly).